We begin with the raw amino-acid sequence, 242 residues long: MSEWLFDLGNSRFKYAPLDGTRAGDVQAWAHGAEAMDTAALSALPSGKVAHVASVAAAGLTERVLASLRTRFEQVRVVRTAAACAGVRIAYADPSRFGVDRFLALLGARGDAPVLVAGVGTALTIDVLDADGQHHGGRIAASPTTMREALHARAVQLPPTGGAYAELANDTDDALTSGCDGAAVALIERSLQHAARTLGMPVRLLVHGGGAPPLLPLLPTAEFRAALVLDGLATWATHSAAP.

Residue 7 to 14 (DLGNSRFK) participates in ATP binding. Residues Y91 and 98–101 (GVDR) each bind substrate. The active-site Proton acceptor is the D100. Residue T121 coordinates ATP. T171 is a binding site for substrate.

Belongs to the type III pantothenate kinase family. In terms of assembly, homodimer. It depends on NH4(+) as a cofactor. K(+) serves as cofactor.

It is found in the cytoplasm. It carries out the reaction (R)-pantothenate + ATP = (R)-4'-phosphopantothenate + ADP + H(+). Its pathway is cofactor biosynthesis; coenzyme A biosynthesis; CoA from (R)-pantothenate: step 1/5. Catalyzes the phosphorylation of pantothenate (Pan), the first step in CoA biosynthesis. In Xanthomonas campestris pv. campestris (strain B100), this protein is Type III pantothenate kinase.